The chain runs to 638 residues: 1-deoxy-D-xylulose-5-phosphate synthase (638 aa).

Residues histidine 79 and 120–122 (AHS) contribute to the thiamine diphosphate site. Aspartate 151 is a binding site for Mg(2+). Thiamine diphosphate contacts are provided by residues 152-153 (GA), asparagine 180, tyrosine 289, and glutamate 371. Asparagine 180 lines the Mg(2+) pocket.

This sequence belongs to the transketolase family. DXPS subfamily. As to quaternary structure, homodimer. The cofactor is Mg(2+). Requires thiamine diphosphate as cofactor.

The catalysed reaction is D-glyceraldehyde 3-phosphate + pyruvate + H(+) = 1-deoxy-D-xylulose 5-phosphate + CO2. The protein operates within metabolic intermediate biosynthesis; 1-deoxy-D-xylulose 5-phosphate biosynthesis; 1-deoxy-D-xylulose 5-phosphate from D-glyceraldehyde 3-phosphate and pyruvate: step 1/1. In terms of biological role, catalyzes the acyloin condensation reaction between C atoms 2 and 3 of pyruvate and glyceraldehyde 3-phosphate to yield 1-deoxy-D-xylulose-5-phosphate (DXP). This chain is 1-deoxy-D-xylulose-5-phosphate synthase, found in Rhizobium etli (strain CIAT 652).